A 270-amino-acid chain; its full sequence is Shikimate dehydrogenase (NADP(+)) (270 aa).

Shikimate is bound by residues 14–16 (SLS) and Thr61. The active-site Proton acceptor is the Lys65. Residue Asp77 coordinates NADP(+). Positions 86 and 101 each coordinate shikimate. Residues 125–129 (GNGGA) and Ile210 contribute to the NADP(+) site. Residue Tyr212 coordinates shikimate. Gly233 is an NADP(+) binding site.

Belongs to the shikimate dehydrogenase family. Homodimer.

It carries out the reaction shikimate + NADP(+) = 3-dehydroshikimate + NADPH + H(+). It functions in the pathway metabolic intermediate biosynthesis; chorismate biosynthesis; chorismate from D-erythrose 4-phosphate and phosphoenolpyruvate: step 4/7. Involved in the biosynthesis of the chorismate, which leads to the biosynthesis of aromatic amino acids. Catalyzes the reversible NADPH linked reduction of 3-dehydroshikimate (DHSA) to yield shikimate (SA). This chain is Shikimate dehydrogenase (NADP(+)), found in Clostridium beijerinckii (strain ATCC 51743 / NCIMB 8052) (Clostridium acetobutylicum).